Consider the following 231-residue polypeptide: Ion-translocating oxidoreductase complex subunit E (231 aa).

6 helical membrane-spanning segments follow: residues Ala18–Ala38, Leu39–Leu59, Thr63–Val83, Leu86–Val106, Ala125–Leu145, and Pro182–Gly202.

It belongs to the NqrDE/RnfAE family. In terms of assembly, the complex is composed of six subunits: RsxA, RsxB, RsxC, RsxD, RsxE and RsxG.

The protein resides in the cell inner membrane. In terms of biological role, part of a membrane-bound complex that couples electron transfer with translocation of ions across the membrane. Required to maintain the reduced state of SoxR. This chain is Ion-translocating oxidoreductase complex subunit E, found in Escherichia coli (strain SE11).